Reading from the N-terminus, the 143-residue chain is SsrA-binding protein (143 aa).

Belongs to the SmpB family.

The protein localises to the cytoplasm. In terms of biological role, required for rescue of stalled ribosomes mediated by trans-translation. Binds to transfer-messenger RNA (tmRNA), required for stable association of tmRNA with ribosomes. tmRNA and SmpB together mimic tRNA shape, replacing the anticodon stem-loop with SmpB. tmRNA is encoded by the ssrA gene; the 2 termini fold to resemble tRNA(Ala) and it encodes a 'tag peptide', a short internal open reading frame. During trans-translation Ala-aminoacylated tmRNA acts like a tRNA, entering the A-site of stalled ribosomes, displacing the stalled mRNA. The ribosome then switches to translate the ORF on the tmRNA; the nascent peptide is terminated with the 'tag peptide' encoded by the tmRNA and targeted for degradation. The ribosome is freed to recommence translation, which seems to be the essential function of trans-translation. In Deinococcus radiodurans (strain ATCC 13939 / DSM 20539 / JCM 16871 / CCUG 27074 / LMG 4051 / NBRC 15346 / NCIMB 9279 / VKM B-1422 / R1), this protein is SsrA-binding protein.